The following is a 160-amino-acid chain: Ribosome maturation factor RimP (160 aa).

The protein belongs to the RimP family.

It localises to the cytoplasm. Its function is as follows. Required for maturation of 30S ribosomal subunits. The polypeptide is Ribosome maturation factor RimP (Citrifermentans bemidjiense (strain ATCC BAA-1014 / DSM 16622 / JCM 12645 / Bem) (Geobacter bemidjiensis)).